Consider the following 214-residue polypeptide: Ras-related protein RABA2b (214 aa).

Position 19–26 (19–26 (GDSGVGKS)) interacts with GTP. Residues 41 to 49 (SKSTIGVEF) carry the Effector region motif. Residues 67 to 71 (DTAGQ), 125 to 128 (NKSD), and 155 to 156 (SA) contribute to the GTP site. Residues C211 and C212 are each lipidated (S-geranylgeranyl cysteine).

It belongs to the small GTPase superfamily. Rab family. As to expression, expressed in root tips.

The protein resides in the endosome membrane. It is found in the golgi apparatus. It localises to the trans-Golgi network membrane. In terms of biological role, intracellular vesicle trafficking and protein transport. This chain is Ras-related protein RABA2b (RABA2B), found in Arabidopsis thaliana (Mouse-ear cress).